The primary structure comprises 502 residues: Neuronal acetylcholine receptor subunit alpha-7 (502 aa).

The signal sequence occupies residues 1–23; it reads MGLRALMLWLLAAAGLVRESLQG. The Extracellular segment spans residues 24–233; sequence EFQRKLYKEL…VTMRRRTLYY (210 aa). Residues Arg-42 and Val-44 each coordinate Ca(2+). Residues Asn-46, Asn-90, and Asn-133 are each glycosylated (N-linked (GlcNAc...) asparagine). A disulfide bridge links Cys-150 with Cys-164. Positions 172 and 210 each coordinate Ca(2+). A disulfide bridge connects residues Cys-212 and Cys-213. The next 3 helical transmembrane spans lie at 234–254, 262–282, and 295–315; these read GLNL…VFLL, ISLG…VAEI, and QYFA…VIVL. Over 316-469 the chain is Cytoplasmic; sequence QYHHHDPDGG…WKFAASVVDR (154 aa). The chain crosses the membrane as a helical span at residues 470-490; that stretch reads LCLMAFSVFTIICTIGILMSA.

This sequence belongs to the ligand-gated ion channel (TC 1.A.9) family. Acetylcholine receptor (TC 1.A.9.1) subfamily. Alpha-7/CHRNA7 sub-subfamily. In terms of assembly, homopentamer. Can also form heteropentamers with CHRNB2, mainly found in basal forebrain cholinergic neurons.

It is found in the postsynaptic cell membrane. The protein localises to the cell membrane. It carries out the reaction Ca(2+)(in) = Ca(2+)(out). The catalysed reaction is K(+)(in) = K(+)(out). It catalyses the reaction Na(+)(in) = Na(+)(out). The enzyme catalyses choline(out) = choline(in). It carries out the reaction NH4(+)(in) = NH4(+)(out). The catalysed reaction is L-arginine(in) = L-arginine(out). It catalyses the reaction guanidine(out) = guanidine(in). Its activity is regulated as follows. Activated by a myriad of ligands such as acetylcholine, cytisine, nicotine, choline and epibatidine. Activity is modulated by positive allosteric modulators (PAMs), such as flavonoids, with a wide range of chemical diversity, pharmacological sensitivity and efficacy. AChR activity is inhibited by the antagonists alpha-conotoxons RgIA, ImI and ImII, small disulfide-constrained peptides from cone snails. Its function is as follows. Component of neuronal acetylcholine receptors (nAChRs) that function as pentameric, ligand-gated cation channels with high calcium permeability among other activities. nAChRs are excitatory neurotrasnmitter receptors formed by a collection of nAChR subunits known to mediate synaptic transmission in the nervous system and the neuromuscular junction. Each nAchR subunit confers differential attributes to channel properties, including activation, deactivation and desensitization kinetics, pH sensitivity, cation permeability, and binding to allosteric modulators. CHRNA7 is an homooligomeric neuronal acetylcholine receptor abundantly expressed in the central nervous system. Characterized by a fast desensitization and high calcium permeability. Also expressed in non-neuronal cells such as immune cells like lymphocytes, monocytes and macrophages. This chain is Neuronal acetylcholine receptor subunit alpha-7 (CHRNA7), found in Gallus gallus (Chicken).